We begin with the raw amino-acid sequence, 318 residues long: Endochitinase 1 (318 aa).

Positions 1–18 (EFTTLFLLFSVLLLSASA) are cleaved as a signal peptide. Residues 19 to 60 (EQCGSQAGGALCASGLCCSKFGWCGDTNDYCGPGNCQSQCPG) enclose the Chitin-binding type-1 domain. Intrachain disulfides connect Cys21–Cys36, Cys30–Cys42, Cys35–Cys49, Cys54–Cys58, Cys89–Cys152, Cys164–Cys172, and Cys271–Cys303. Glu134 functions as the Proton donor in the catalytic mechanism. Positions 312 to 318 (GLLVDTM) are cleaved as a propeptide — removed in mature form, vacuolar targeting.

The protein belongs to the glycosyl hydrolase 19 family. Chitinase class I subfamily.

The protein localises to the vacuole. It carries out the reaction Random endo-hydrolysis of N-acetyl-beta-D-glucosaminide (1-&gt;4)-beta-linkages in chitin and chitodextrins.. Its function is as follows. Defense against chitin-containing fungal pathogens. This chain is Endochitinase 1 (CHTB1), found in Solanum tuberosum (Potato).